Consider the following 792-residue polypeptide: Serine/threonine-protein kinase Nek4 (792 aa).

A Protein kinase domain is found at Tyr-6 to Ile-261. ATP-binding positions include Val-12–Val-20 and Lys-35. The active-site Proton acceptor is Asp-131. The residue at position 165 (Thr-165) is a Phosphothreonine; by autocatalysis. Disordered stretches follow at residues Gln-329–Glu-358, Ala-379–Tyr-515, Gln-527–Gln-611, and Leu-628–Met-657. Phosphoserine is present on residues Ser-340 and Ser-343. Composition is skewed to polar residues over residues Gln-412–Pro-421, Asp-456–Ser-467, Gln-473–Ser-484, Ala-496–Gln-505, and Val-541–Ser-551. Lys-566 is modified (N6-methyllysine). The span at Arg-602–Gln-611 shows a compositional bias: polar residues. Basic and acidic residues predominate over residues Asp-641–Met-657. At Ser-675 the chain carries Phosphoserine.

This sequence belongs to the protein kinase superfamily. NEK Ser/Thr protein kinase family. NIMA subfamily. It depends on Mn(2+) as a cofactor. As to expression, expressed ubiquitously among various organs and is up-regulated in the testis.

It is found in the cytoplasm. The protein resides in the cell projection. It localises to the cilium. It catalyses the reaction L-seryl-[protein] + ATP = O-phospho-L-seryl-[protein] + ADP + H(+). The enzyme catalyses L-threonyl-[protein] + ATP = O-phospho-L-threonyl-[protein] + ADP + H(+). Required for normal entry into proliferative arrest after a limited number of cell divisions, also called replicative senescence. Required for normal cell cycle arrest in response to double-stranded DNA damage. Protein kinase that seems to act exclusively upon threonine residues. The protein is Serine/threonine-protein kinase Nek4 (Nek4) of Mus musculus (Mouse).